The primary structure comprises 421 residues: 3-alpha-mycarosylerythronolide B desosaminyl transferase (421 aa).

A signal peptide spans 1–23 (MRVVFSSMASKSHLFGLVPLAWA).

The protein belongs to the glycosyltransferase 28 family. In terms of assembly, heterotetramer composed of EryCII and EryCIII.

It carries out the reaction 3-O-alpha-L-mycarosylerythronolide B + dTDP-alpha-D-desosamine = erythromycin D + dTDP + H(+). It participates in antibiotic biosynthesis; erythromycin biosynthesis. In terms of biological role, catalyzes the conversion of alpha-L-mycarosylerythronolide B into erythromycin D in the erythromycin biosynthesis pathway. The polypeptide is 3-alpha-mycarosylerythronolide B desosaminyl transferase (eryCIII) (Saccharopolyspora erythraea (strain ATCC 11635 / DSM 40517 / JCM 4748 / NBRC 13426 / NCIMB 8594 / NRRL 2338)).